A 284-amino-acid chain; its full sequence is 4-diphosphocytidyl-2-C-methyl-D-erythritol kinase (284 aa).

Lys14 is a catalytic residue. Pro98–Ser108 is a binding site for ATP. The active site involves Asp140.

Belongs to the GHMP kinase family. IspE subfamily.

The catalysed reaction is 4-CDP-2-C-methyl-D-erythritol + ATP = 4-CDP-2-C-methyl-D-erythritol 2-phosphate + ADP + H(+). It functions in the pathway isoprenoid biosynthesis; isopentenyl diphosphate biosynthesis via DXP pathway; isopentenyl diphosphate from 1-deoxy-D-xylulose 5-phosphate: step 3/6. Its function is as follows. Catalyzes the phosphorylation of the position 2 hydroxy group of 4-diphosphocytidyl-2C-methyl-D-erythritol. The polypeptide is 4-diphosphocytidyl-2-C-methyl-D-erythritol kinase (Shewanella sp. (strain W3-18-1)).